Consider the following 480-residue polypeptide: NADH-quinone oxidoreductase subunit N (480 aa).

Transmembrane regions (helical) follow at residues 10 to 30, 40 to 60, 80 to 100, 117 to 137, 166 to 186, 208 to 228, 246 to 266, 276 to 296, 304 to 324, 330 to 350, 374 to 394, 409 to 431, and 452 to 472; these read FISI…ILIE, WSSL…WGGI, FFTV…TAFF, AVFG…FLGI, LMGS…YGAI, VLFF…AALV, TAFM…RLFF, WNQV…FVAL, FFAY…VIGN, ALTF…AVLA, LASL…TAGF, YYGL…LRII, and IVGT…APFL.

Belongs to the complex I subunit 2 family. In terms of assembly, NDH-1 is composed of 14 different subunits. Subunits NuoA, H, J, K, L, M, N constitute the membrane sector of the complex.

It localises to the cell inner membrane. It carries out the reaction a quinone + NADH + 5 H(+)(in) = a quinol + NAD(+) + 4 H(+)(out). Its function is as follows. NDH-1 shuttles electrons from NADH, via FMN and iron-sulfur (Fe-S) centers, to quinones in the respiratory chain. The immediate electron acceptor for the enzyme in this species is believed to be ubiquinone. Couples the redox reaction to proton translocation (for every two electrons transferred, four hydrogen ions are translocated across the cytoplasmic membrane), and thus conserves the redox energy in a proton gradient. This Protochlamydia amoebophila (strain UWE25) protein is NADH-quinone oxidoreductase subunit N.